Consider the following 586-residue polypeptide: Beta-fructofuranosidase, insoluble isoenzyme 3 (586 aa).

Residues 1–26 (MATARARAALVFVALLQMAAVVVVRA) form the signal peptide. D61 is a catalytic residue. 5 N-linked (GlcNAc...) asparagine glycosylation sites follow: N154, N179, N341, N390, and N479.

It belongs to the glycosyl hydrolase 32 family.

Its subcellular location is the secreted. The protein resides in the extracellular space. The protein localises to the apoplast. It localises to the cell wall. The catalysed reaction is Hydrolysis of terminal non-reducing beta-D-fructofuranoside residues in beta-D-fructofuranosides.. The protein is Beta-fructofuranosidase, insoluble isoenzyme 3 (CIN3) of Oryza sativa subsp. indica (Rice).